We begin with the raw amino-acid sequence, 316 residues long: Thymidylate synthase (316 aa).

Residues Arg23 and 178–179 each bind dUMP; that span reads RR. The active-site Nucleophile is Cys198. DUMP-binding positions include 218 to 221, Asn229, and 259 to 261; these read RSGD and HIY. Asp221 is a binding site for (6R)-5,10-methylene-5,6,7,8-tetrahydrofolate. Position 315 (Ala315) interacts with (6R)-5,10-methylene-5,6,7,8-tetrahydrofolate.

Belongs to the thymidylate synthase family. Bacterial-type ThyA subfamily. In terms of assembly, homodimer.

The protein resides in the cytoplasm. It catalyses the reaction dUMP + (6R)-5,10-methylene-5,6,7,8-tetrahydrofolate = 7,8-dihydrofolate + dTMP. It participates in pyrimidine metabolism; dTTP biosynthesis. Its function is as follows. Catalyzes the reductive methylation of 2'-deoxyuridine-5'-monophosphate (dUMP) to 2'-deoxythymidine-5'-monophosphate (dTMP) while utilizing 5,10-methylenetetrahydrofolate (mTHF) as the methyl donor and reductant in the reaction, yielding dihydrofolate (DHF) as a by-product. This enzymatic reaction provides an intracellular de novo source of dTMP, an essential precursor for DNA biosynthesis. This chain is Thymidylate synthase, found in Lactiplantibacillus plantarum (strain ATCC BAA-793 / NCIMB 8826 / WCFS1) (Lactobacillus plantarum).